The sequence spans 295 residues: NAD kinase (295 aa).

The active-site Proton acceptor is the Asp72. NAD(+)-binding positions include Asp72–Gly73, Asn146–Asp147, Arg157, Lys174, Asp176, Thr187–Ser192, and Gln247.

It belongs to the NAD kinase family. Requires a divalent metal cation as cofactor.

It is found in the cytoplasm. It carries out the reaction NAD(+) + ATP = ADP + NADP(+) + H(+). Involved in the regulation of the intracellular balance of NAD and NADP, and is a key enzyme in the biosynthesis of NADP. Catalyzes specifically the phosphorylation on 2'-hydroxyl of the adenosine moiety of NAD to yield NADP. This is NAD kinase from Pseudomonas aeruginosa (strain LESB58).